A 680-amino-acid chain; its full sequence is WD repeat-containing protein 48 homolog (680 aa).

8 WD repeats span residues 26-65, 71-110, 113-152, 164-203, 206-245, 248-287, 290-329, and 350-389; these read QHRN…SEKY, HHND…CMST, THRD…ALTA, GSKD…RSMK, GHTE…CVQT, VHKE…NKTL, EEQA…RCTM, and KGGA…KKEQ. The interval 592-616 is disordered; the sequence is ETTPSGGNANNSLQNSQSDANSEGS.

It belongs to the WD repeat WDR48 family. Catalytic component of the Usp12-46 deubiquitylase complex consisting of Usp12-46, Wdr20 and Uaf1; regulatory subunit that, together wtih Wdr20, stabilizes Usp12-46. The Usp12-46 deubiquitylase complex associates with arr/arrow; the interaction leads to deubiquitination and stabilization of arr/arrow.

Its function is as follows. Regulatory component of the Usp12-46 deubiquitylase complex. activates deubiquitination by increasing the catalytic turnover without increasing the affinity of deubiquitinating enzymes for the substrate. The complex deubiquitylates the wg/wingless-signaling receptor arr/arrow, which stabilizes the receptor and increases its concentration at the cell surface; this enhances the sensitivity of cells to wg/wingless-signal stimulation. This increases the amplitude and spatial range of the signaling response to the wg/wingless morphogen gradient, facilitating the precise concentration-dependent regulation of its target genes. Together with Wdr20 and Usp12-46 required for wg/wingless-mediated signaling in the wing imaginal disc and for wg/wingless-dependent regulation of intestinal stem cell proliferation. The sequence is that of WD repeat-containing protein 48 homolog from Drosophila yakuba (Fruit fly).